We begin with the raw amino-acid sequence, 251 residues long: ATP synthase subunit a 2 (251 aa).

Helical transmembrane passes span 35 to 55 (GQVF…SLLA), 94 to 114 (LPFI…GSLI), 133 to 153 (INTT…AGLS), 198 to 218 (LVVA…LMAL), and 219 to 239 (GLFT…AYIH).

The protein belongs to the ATPase A chain family. F-type ATPases have 2 components, CF(1) - the catalytic core - and CF(0) - the membrane proton channel. CF(1) has five subunits: alpha(3), beta(3), gamma(1), delta(1), epsilon(1). CF(0) has four main subunits: a, b, b' and c.

It localises to the cellular thylakoid membrane. Its function is as follows. Key component of the proton channel; it plays a direct role in the translocation of protons across the membrane. This Crocosphaera subtropica (strain ATCC 51142 / BH68) (Cyanothece sp. (strain ATCC 51142)) protein is ATP synthase subunit a 2.